Here is a 283-residue protein sequence, read N- to C-terminus: V-set domain containing T-cell activation inhibitor 1 (283 aa).

The signal sequence occupies residues 1–24 (MASLGQIIFWSIINIIIILAGAIA). 2 Ig-like V-type domains span residues 35–144 (HFIT…ANLE) and 153–241 (PEIN…IKVT). 2 disulfides stabilise this stretch: Cys-56/Cys-130 and Cys-168/Cys-225. Residue Asn-216 is glycosylated (N-linked (GlcNAc...) asparagine). Residue Gly-257 is the site of GPI-anchor amidated glycine attachment. Positions 258-283 (PSPCVFSSAFVAGWALLSLSCCLMLR) are cleaved as a propeptide — removed in mature form.

Belongs to the immunoglobulin superfamily. BTN/MOG family. In terms of processing, N-glycosylated. Expressed on the surface of professional antigen-presenting cells (at protein level). Widely expressed, including in kidney, liver, lung, pancreas, placenta, prostate, spleen, testis and thymus.

It is found in the cell membrane. In terms of biological role, negatively regulates T-cell-mediated immune response by inhibiting T-cell activation, proliferation, cytokine production and development of cytotoxicity. When expressed on the cell surface of tumor macrophages, plays an important role, together with regulatory T-cells (Treg), in the suppression of tumor-associated antigen-specific T-cell immunity. Involved in promoting epithelial cell transformation. This is V-set domain containing T-cell activation inhibitor 1 from Mus musculus (Mouse).